A 460-amino-acid chain; its full sequence is MFEDIPVDVSPMHEGERIRSANMFVELAGPKSIGAELVQVKDEVEDGKVEVKGPEIDEMEQGQVYPFAINVEVAGSELEEELESVIERRLHELCNYVKGFMHLNQRDQIWCRVSTEAKDAGFRLEHLGKALSVLFREEFPIIESIAVTLMTDEAAVQEFLETAREKYETRDSRARELSDEDVDVFYGCLMCQSFAPTHVCIVTPDRTALCGAINWFDCRAAYKMDPDGPIFEIEKGEVLDPERGEYANVNAAVEENSQGTTDRVYLHSVFGYPHTSCGCFEAVAFYIPELDGIGIVNRDFRGETPLGIPFSAMAGQCSGGKQVEGFSGLSLEYMRSPKFLQADGGYHRVIWMPRELKESVLEFIPEDVRDKIATEEDATSIKDLRRFLRDNEHPVLERAAVEETEPEEEEVEEAYPEETPIPEGVPVMAAPEMTLPAAGGFRIVLKNAKIYAEKVIIKRK.

[Ni-Fe-S] cluster-binding residues include C188, C191, C277, and C279. Positions 402 to 416 (EETEPEEEEVEEAYP) are enriched in acidic residues. Positions 402–422 (EETEPEEEEVEEAYPEETPIP) are disordered.

It belongs to the CdhC family. In terms of assembly, monomer. The ACDS complex is made up of alpha, epsilon, beta, gamma and delta chains with a probable stoichiometry of (alpha(2)epsilon(2))(4)-beta(8)-(gamma(1)delta(1))(8). [Ni-Fe-S] cluster serves as cofactor.

The catalysed reaction is Co(I)-[corrinoid Fe-S protein] + acetyl-CoA + H(+) = methyl-Co(III)-[corrinoid Fe-S protein] + CO + CoA. In terms of biological role, part of a complex that catalyzes the reversible cleavage of acetyl-CoA, allowing autotrophic growth from CO(2). The alpha-epsilon complex generates CO from CO(2), while the beta subunit (this protein) combines the CO with CoA and a methyl group to form acetyl-CoA. The methyl group, which is incorporated into acetyl-CoA, is transferred to the beta subunit by a corrinoid iron-sulfur protein (the gamma-delta complex). In Methanothermobacter thermautotrophicus (strain ATCC 29096 / DSM 1053 / JCM 10044 / NBRC 100330 / Delta H) (Methanobacterium thermoautotrophicum), this protein is Acetyl-CoA decarbonylase/synthase complex subunit beta.